Consider the following 396-residue polypeptide: G-protein coupled receptor 84 (396 aa).

Residues 1–21 are Extracellular-facing; the sequence is MWNSSDANFSCYHESVLGYRY. 2 N-linked (GlcNAc...) asparagine glycosylation sites follow: Asn3 and Asn8. A helical transmembrane segment spans residues 22–42; that stretch reads FAVIWGVAVAVTGTVGNVLTL. The Cytoplasmic portion of the chain corresponds to 43–57; it reads LALAIRPKLRTRFNL. Residues 58 to 78 form a helical membrane-spanning segment; sequence LIANLTLADLLYCTLLQPFSV. Topologically, residues 79–94 are extracellular; it reads DTYLHLHWRTGAVFCR. Residues 95–115 traverse the membrane as a helical segment; that stretch reads IFGLLLFTSNSVSILTLCLIA. Residues 116 to 135 are Cytoplasmic-facing; it reads LGRYLLIAHPKLFPQVFSAK. Residues 136-156 form a helical membrane-spanning segment; sequence GIVLALVGSWVVGVTSFAPLW. Over 157 to 180 the chain is Extracellular; that stretch reads NVFVLVPVVCTCSFDRMRGRPYTT. The helical transmembrane segment at 181 to 201 threads the bilayer; it reads ILMGIYFVLGLSSVGVFYCLI. At 202–320 the chain is on the cytoplasmic side; that stretch reads HRQVKRAARA…PSEFGKVTRM (119 aa). Phosphoserine is present on residues Ser221 and Ser224. The tract at residues 241–310 is disordered; the sequence is LDSGVASRGP…TAGARRATDA (70 aa). A compositionally biased stretch (polar residues) spans 253-269; it reads GISSEPVSAATTQTLEG. Thr263 and Thr264 each carry phosphothreonine. The segment covering 290-308 has biased composition (basic and acidic residues); it reads SLPEVHRKPRETAGARRAT. Residues 321 to 341 form a helical membrane-spanning segment; sequence CFAVFLCFALSYIPFLLLNIL. The Extracellular segment spans residues 342–352; it reads DARGRAPRVVH. A helical transmembrane segment spans residues 353–373; sequence MVAANLTWLNSCINPVLYAAM. Topologically, residues 374 to 396 are cytoplasmic; that stretch reads NRQFRHAYGSILKRGPQSFRRFH.

It belongs to the G-protein coupled receptor 1 family. In terms of assembly, interacts with ARRB2 and ARR3. In terms of processing, phosphorylated by a subset of GPR84-activating ligands. Constitutively phosphorylated at Ser-221 and Ser-224 in the absence of 2-HTP. By contrast, Thr-263 and Thr-264 are phosphorylated only following prior cell treatment with 2-HTP. In terms of tissue distribution, expressed predominantly in hematopoietic tissues. Expressed mainly in the bone marrow with transcripts also detected in spleen, the lymph node, liver and the lung.

Its subcellular location is the cell membrane. Its function is as follows. G protein-coupled receptor that responds endogenously to dietary fatty acids or nutrient, specifically medium-chain free fatty acid (FFA) with carbon chain lengths of C9 to C14. Capric acid (C10:0), undecanoic acid (C11:0) and lauric acid (C12:0) are the most potent agonists. In immune cells, functions as a pro-inflammatory receptor via 6-OAU and promotes the expression of pro-inflammatory mediators such as TNFalpha, IL-6 and IL-12B as well as stimulating chemotactic responses through activation of signaling mediators AKT, ERK and NF-kappa-B (by sim). In addition, triggers increased bacterial adhesion and phagocytosis in macrophages and regulates pro-inflammatory function via enhancing NLRP3 inflammasome activation. Also plays an important role in inflammation by modulating neutrophil functions. Mechanistically, promotes neutrophil chemotaxis, reactive oxygen species (ROS) production and degranulation via LYN-AKT/ERK pathway. To regulate ROS production, communicates with the two formyl peptide receptors FPR2 and FPR1 to control the NADPH oxidase activity in neutrophils. This Mus musculus (Mouse) protein is G-protein coupled receptor 84 (Gpr84).